Reading from the N-terminus, the 268-residue chain is Tryptophan synthase alpha chain (268 aa).

Catalysis depends on proton acceptor residues E49 and D60.

This sequence belongs to the TrpA family. In terms of assembly, tetramer of two alpha and two beta chains.

The enzyme catalyses (1S,2R)-1-C-(indol-3-yl)glycerol 3-phosphate + L-serine = D-glyceraldehyde 3-phosphate + L-tryptophan + H2O. The protein operates within amino-acid biosynthesis; L-tryptophan biosynthesis; L-tryptophan from chorismate: step 5/5. In terms of biological role, the alpha subunit is responsible for the aldol cleavage of indoleglycerol phosphate to indole and glyceraldehyde 3-phosphate. The protein is Tryptophan synthase alpha chain of Salmonella typhimurium (strain LT2 / SGSC1412 / ATCC 700720).